We begin with the raw amino-acid sequence, 419 residues long: NFATC2-interacting protein (419 aa).

Disordered regions lie at residues 1–131 (MAEP…GKVK) and 151–215 (DEEE…HTRA). The segment covering 11 to 27 (WSGGSGAGRGGRGGWGG) has biased composition (gly residues). A compositionally biased stretch (low complexity) spans 35–51 (QRSPSRGTLDVVSVDLV). 6 positions are modified to phosphoserine: serine 54, serine 84, serine 88, serine 90, serine 92, and serine 127. Residues lysine 129 and lysine 131 each participate in a glycyl lysine isopeptide (Lys-Gly) (interchain with G-Cter in SUMO2) cross-link. Residues 180–192 (RTKDKEEKKKTEF) are compositionally biased toward basic and acidic residues. Phosphoserine is present on residues serine 198, serine 201, serine 204, serine 220, and serine 314. Positions 209 to 231 (SRTHTRALKKLSEVNKRLQDLRS) form a coiled coil. Threonine 316 and threonine 318 each carry phosphothreonine. Residues 348-419 (LQLRVQGKEK…ESGDLIEVWG (72 aa)) form the Ubiquitin-like domain. Phosphoserine occurs at positions 369 and 390.

In terms of assembly, interacts with NFATC2, TRAF1, TRAF2 and PRMT1. Interacts with UBE2I/UBC9. Post-translationally, methylation at the N-terminus by PRMT1 modulates interaction with the NFAT complex and results in augmented cytokine production.

The protein localises to the nucleus. It is found in the cytoplasm. In terms of biological role, in T-helper 2 (Th2) cells, regulates the magnitude of NFAT-driven transcription of a specific subset of cytokine genes, including IL3, IL4, IL5 and IL13, but not IL2. Recruits PRMT1 to the IL4 promoter; this leads to enhancement of histone H4 'Arg-3'-methylation and facilitates subsequent histone acetylation at the IL4 locus, thus promotes robust cytokine expression. Down-regulates formation of poly-SUMO chains by UBE2I/UBC9. In Homo sapiens (Human), this protein is NFATC2-interacting protein (NFATC2IP).